The primary structure comprises 185 residues: Ribosome-recycling factor (185 aa).

The protein belongs to the RRF family.

The protein resides in the cytoplasm. Functionally, responsible for the release of ribosomes from messenger RNA at the termination of protein biosynthesis. May increase the efficiency of translation by recycling ribosomes from one round of translation to another. This Frankia alni (strain DSM 45986 / CECT 9034 / ACN14a) protein is Ribosome-recycling factor.